A 514-amino-acid polypeptide reads, in one-letter code: MSAEGEPAEAVAETPANSPGEEAAAAAATTDVDVREEQRPEKQSLSASMCRESHWKCLLLSILMFVCLGAVTWCQVTSVTKLSFDSSLKGRSMIYHGSPCSDGYVYIPLAFLAMLYVVYLVECWHCHAKSELQNKADISSVHDQIQRMRQATPCIWWKAISYHFVRRTRQVTRYRHGDAYTTTQVYHERVNTHVAEAEFEYSHCGIKDISKDLLDLERHPATKLKFTKCFSFANVESENSYLTQRARFFTEIEGLDDYMEAREGMQLKNVDFKELVVAYVDLEKQPWYVSHYAFWVAALFMLSWPLRVFIEYRTAHVHYHIEKLLGLEYTASSTGDEPIYRFRMPRVSTLDSTELEWHICTNRQLIPSYSEAVLMDLTDASLCNGYSSCGYRGVLQACEGCNRASSSSSIFSRHAIHSCSGGPSHLSLSTSRFSLCQLHGSHRTGLWRSRSSSLADRGCQDERCCSYSSQLALNENPPTYHDARFFPVLIVHRQEGCQTRNFCLHRSSCMETSL.

The tract at residues 1 to 40 (MSAEGEPAEAVAETPANSPGEEAAAAAATTDVDVREEQRP) is disordered. A run of 3 helical transmembrane segments spans residues 57 to 77 (CLLL…CQVT), 104 to 124 (YVYI…VECW), and 286 to 306 (PWYV…SWPL).

Belongs to the TMEM151 family.

It localises to the membrane. In Xenopus tropicalis (Western clawed frog), this protein is Transmembrane protein 151B (tmem151b).